Here is a 313-residue protein sequence, read N- to C-terminus: Protein OPG185 (313 aa).

The N-terminal stretch at 1–16 (MTQLPILLLLISLVYA) is a signal peptide. Residues 17–274 (TPSPQTSKKI…TSISNYKTKD (258 aa)) lie on the Virion surface side of the membrane. N-linked (GlcNAc...) asparagine; by host glycosylation is found at Asn37, Asn69, Asn112, Asn159, Asn194, and Asn252. The helical transmembrane segment at 275–295 (FVEIFGITTLIILSAVAIFCI) threads the bilayer. Topologically, residues 296–313 (TYYICNKHPRKYKTENKV) are intravirion.

This sequence belongs to the orthopoxvirus OPG185 family. As to quaternary structure, heterodimerizes with OPG040. The heterodimer OPG185-OPG040 interacts with components of the entry fusion complex OPG143 and OPG094. Heterodimer with C3/VPC protein; disulfide-linked. In terms of processing, glycosylated; contains phosphate and sulfate-substituted glycans. O-glycosylation is required for hemagglutination and hemadsorption activities of infected cell membranes.

It is found in the virion membrane. The protein localises to the host membrane. Prevents cell to cell fusion by interacting with and directing the viral OPG040 protein on the host plasma membrane. The OPG185-OPG040 complex associates with components of the entry fusion complex (EFC) presumably to avoid superinfection and syncytium formation. Via its interaction with C3/VCP protein, protects the infected cell and probably also the extracellular enveloped virus from complement attack. The chain is Protein OPG185 (OPG185) from Monkeypox virus.